Consider the following 311-residue polypeptide: Coproporphyrin III ferrochelatase 1 (311 aa).

Fe-coproporphyrin III-binding positions include Tyr12, Arg29, 45 to 46, Ser53, and Tyr124; that span reads RY. Positions 182 and 263 each coordinate Fe(2+).

The protein belongs to the ferrochelatase family.

It is found in the cytoplasm. The enzyme catalyses Fe-coproporphyrin III + 2 H(+) = coproporphyrin III + Fe(2+). The protein operates within porphyrin-containing compound metabolism; protoheme biosynthesis. Its function is as follows. Involved in coproporphyrin-dependent heme b biosynthesis. Catalyzes the insertion of ferrous iron into coproporphyrin III to form Fe-coproporphyrin III. The protein is Coproporphyrin III ferrochelatase 1 of Bacillus cereus (strain ZK / E33L).